A 115-amino-acid polypeptide reads, in one-letter code: Large ribosomal subunit protein bL19 (115 aa).

It belongs to the bacterial ribosomal protein bL19 family.

Functionally, this protein is located at the 30S-50S ribosomal subunit interface and may play a role in the structure and function of the aminoacyl-tRNA binding site. This chain is Large ribosomal subunit protein bL19, found in Akkermansia muciniphila (strain ATCC BAA-835 / DSM 22959 / JCM 33894 / BCRC 81048 / CCUG 64013 / CIP 107961 / Muc).